The chain runs to 510 residues: UDP-N-acetylmuramate--L-alanine ligase (510 aa).

Positions 1-25 (MVETVGGKDAVAPAPARSPSPPAKN) are disordered. Position 140–146 (140–146 (GTHGKTT)) interacts with ATP.

The protein belongs to the MurCDEF family.

It is found in the cytoplasm. The enzyme catalyses UDP-N-acetyl-alpha-D-muramate + L-alanine + ATP = UDP-N-acetyl-alpha-D-muramoyl-L-alanine + ADP + phosphate + H(+). It functions in the pathway cell wall biogenesis; peptidoglycan biosynthesis. Its function is as follows. Cell wall formation. The polypeptide is UDP-N-acetylmuramate--L-alanine ligase (Synechococcus sp. (strain JA-3-3Ab) (Cyanobacteria bacterium Yellowstone A-Prime)).